The primary structure comprises 301 residues: 2-oxo-3-(phosphooxy)propyl 3-oxoalkanoate synthase (301 aa).

Belongs to the AfsA family.

The enzyme catalyses a medium-chain 3-oxoacyl-[ACP] + dihydroxyacetone phosphate = a (4-alkanoyl-5-oxo-2,5-dihydrofuran-3-yl)methyl phosphate + holo-[ACP] + H2O. Involved in the biosynthesis of A factor (2-isocapryloyl-3R-hydroxymethyl-gamma-butyrolactone), a gamma-butyrolactone autoregulator that triggers secondary metabolism and morphogenesis in Streptomyces. Catalyzes beta-ketoacyl transfer from 8-methyl-3-oxononanoyl-acyl carrier protein (ACP) to the hydroxyl group of dihydroxyacetone phosphate (DHAP), thus producing an 8-methyl-3-oxononanoyl-DHAP ester. This Streptomyces griseus protein is 2-oxo-3-(phosphooxy)propyl 3-oxoalkanoate synthase.